The following is a 673-amino-acid chain: Potassium-transporting ATPase ATP-binding subunit (673 aa).

Transmembrane regions (helical) follow at residues isoleucine 34–leucine 54, valine 65–leucine 85, isoleucine 216–methionine 236, and isoleucine 253–isoleucine 273. The 4-aspartylphosphate intermediate role is filled by aspartate 304. ATP contacts are provided by residues aspartate 341, glutamate 345, phenylalanine 370–serine 377, and lysine 388. Residues aspartate 511 and aspartate 515 each contribute to the Mg(2+) site. 3 helical membrane passes run phenylalanine 581–methionine 601, alanine 609–methionine 629, and valine 649–isoleucine 669.

Belongs to the cation transport ATPase (P-type) (TC 3.A.3) family. Type IA subfamily. In terms of assembly, the system is composed of three essential subunits: KdpA, KdpB and KdpC.

The protein localises to the cell membrane. The catalysed reaction is K(+)(out) + ATP + H2O = K(+)(in) + ADP + phosphate + H(+). Part of the high-affinity ATP-driven potassium transport (or Kdp) system, which catalyzes the hydrolysis of ATP coupled with the electrogenic transport of potassium into the cytoplasm. This subunit is responsible for energy coupling to the transport system and for the release of the potassium ions to the cytoplasm. The chain is Potassium-transporting ATPase ATP-binding subunit from Staphylococcus epidermidis (strain ATCC 35984 / DSM 28319 / BCRC 17069 / CCUG 31568 / BM 3577 / RP62A).